Here is a 147-residue protein sequence, read N- to C-terminus: uncharacterized protein (147 aa).

The Extracellular segment spans residues 1–16 (MDHRAAFGYFSNACFK). A helical transmembrane segment spans residues 17–37 (VMLFSSLLASFASSVAFISLI). Topologically, residues 38–105 (TFSLSSSESP…FEAAFFLLTN (68 aa)) are cytoplasmic. Residues 106–126 (EMIFFILYYFFSCLMFFYVAS) traverse the membrane as a helical segment. The Extracellular segment spans residues 127–147 (ERNTNPKILQTINTKPLYIKN).

It is found in the membrane. This is an uncharacterized protein from Saccharomyces cerevisiae (strain ATCC 204508 / S288c) (Baker's yeast).